We begin with the raw amino-acid sequence, 411 residues long: MTNGPIQVNSEIGKLKTVLLKRPGKELENLVPDYLDGLLFDDIPFLKVAQQEHDHFAQVLQDEGIEVLYLEKLAAQSIEDSNVREQFIDDVLAESRKTILGHEKEIKKLFSTLSNQALINKIMAGVRKEEIQLESTHLVEYMDDKYPFYLDPMPNLYFTRDPQASIGRGMTVNRMFWRARRRESIFISYILKHHPRFKDENIPLWVDRDCPFNIEGGDELVLSKDVLAIGISERTSAQAIERLARRIFKDPLSTFKKVVAIEIPTSRTFMHLDTVCTMIDYDKFTTHSAILKSEGNMNIFIIEYDDKAEDIKIQHSSHLKQTLEEVLDVDEITLIPTGNGDIIDGAREQWNDGSNTLCIRPGVVVTYDRNYVSNQLLREHGIKVIEIPGSELVRGRGGPRCMSQPLIREDL.

Cysteine 401 (amidino-cysteine intermediate) is an active-site residue.

It belongs to the arginine deiminase family.

The protein resides in the cytoplasm. It carries out the reaction L-arginine + H2O = L-citrulline + NH4(+). Its pathway is amino-acid degradation; L-arginine degradation via ADI pathway; carbamoyl phosphate from L-arginine: step 1/2. The chain is Arginine deiminase from Staphylococcus epidermidis (strain ATCC 35984 / DSM 28319 / BCRC 17069 / CCUG 31568 / BM 3577 / RP62A).